A 623-amino-acid chain; its full sequence is uncharacterized protein (623 aa).

5 helical membrane-spanning segments follow: residues 242–262 (IALA…ITWL), 288–308 (IVSP…LDIF), 318–338 (VSMW…IALF), 361–381 (VINL…LLGV), and 387–407 (FNVS…ALAV).

The protein belongs to the MscS (TC 1.A.23) family.

The protein resides in the cell membrane. This is an uncharacterized protein from Helicobacter pylori (strain J99 / ATCC 700824) (Campylobacter pylori J99).